Reading from the N-terminus, the 230-residue chain is MQPEVSDQIFYAFLTGGLCASSTSTTVTSSSDPFATVYEDKALASLRNHKEAERKRRARINSHLNKLRKLLSCNSKTDKSTLLAKVVQRVKELKQQTLEITDETIPSETDEISVLNIEDCSRGDDRRIIFKVSFCCEDRPELLKDLMETLKSLQMETLFADMTTVGGRTRNVLVVAADKEHHGVQSVNFLQNALKSLLERSSKSVMVGHGGGGGEERLKRRRALDHIIMV.

Residues 44–93 (ASLRNHKEAERKRRARINSHLNKLRKLLSCNSKTDKSTLLAKVVQRVKEL) enclose the bHLH domain.

As to quaternary structure, homodimer.

It localises to the nucleus. This is Putative transcription factor bHLH107 (BHLH107) from Arabidopsis thaliana (Mouse-ear cress).